The primary structure comprises 570 residues: Periplasmic trehalase (570 aa).

The first 34 residues, 1-34 (MIPPEIRRSVLLQKAIKLALAGTLLTFASFSATA), serve as a signal peptide directing secretion. Substrate is bound by residues Arg159, 166–167 (WD), Asn203, 212–214 (HSQ), 284–286 (RPE), and Gly317. Catalysis depends on proton donor/acceptor residues Asp319 and Glu503. Substrate is bound at residue Glu518. The interval 544–570 (KPCDSVPSTRPASLSATPTKTPSAATQ) is disordered. A compositionally biased stretch (low complexity) spans 554–570 (PASLSATPTKTPSAATQ).

Belongs to the glycosyl hydrolase 37 family. As to quaternary structure, monomer.

Its subcellular location is the periplasm. The enzyme catalyses alpha,alpha-trehalose + H2O = alpha-D-glucose + beta-D-glucose. Its function is as follows. Provides the cells with the ability to utilize trehalose at high osmolarity by splitting it into glucose molecules that can subsequently be taken up by the phosphotransferase-mediated uptake system. In Salmonella paratyphi C (strain RKS4594), this protein is Periplasmic trehalase.